Consider the following 796-residue polypeptide: Toll-like receptor 6 (796 aa).

Residues 1–31 form the signal peptide; sequence MTKDKEPIVKSFHFVCLMIIIVGTRIQFSDG. The Extracellular segment spans residues 32 to 586; it reads NEFAVDKSKR…MSELSCNITL (555 aa). LRR repeat units follow at residues 54-77, 78-101, 102-122, 123-147, 148-168, 169-196, 197-219, 220-250, 251-277, 278-303, 304-330, 331-354, 355-378, 379-404, 405-429, 430-450, 451-474, 475-496, and 497-520; these read TKVLDMSQNYIAELQVSDMSFLSE, LTVLRLSHNRIQLLDLSVFKFNQD, LEYLDLSHNQLQKISCHPIVS, FRHLDLSFNDFKALPICKEFGNLSQ, LNFLGLSAMKLQKLDLLPIAH, LHLSYILLDLRNYYIKENETESLQILNA, KTLHLVFHPTSLFAIQVNISVNT, LGCLQLTNIKLNDDNCQVFIKFLSELTRGST, LLNFTLNHIETTWKCLVRVFQFLWPKP, VEYLNIYNLTIIESIREEDFTYSKTT, LKALTIEHITNQVFLFSQTALYTVFSE, MNIMMLTISDTPFIHMLCPHAPST, FKFLNFTQNVFTDSIFEKCSTLVK, LETLILQKNGLKDLFKVGLMTKDMPS, LEILDVSWNSLESGRHKENCTWVES, IVVLNLSSNMLTDSVFRCLPP, RIKVLDLHSNKIKSVPKQVVKLEA, LQELNVAFNSLTDLPGCGSFSS, and LSVLIIDHNSVSHPSADFFQSCQK. Residues Cys-117 and Cys-139 are joined by a disulfide bond. Asn-144 carries N-linked (GlcNAc...) asparagine glycosylation. N-linked (GlcNAc...) asparagine glycans are attached at residues Asn-186 and Asn-214. Residues Cys-235 and Cys-265 are joined by a disulfide bond. Asn-253 and Asn-285 each carry an N-linked (GlcNAc...) asparagine glycan. An intrachain disulfide couples Cys-348 to Cys-373. N-linked (GlcNAc...) asparagine glycosylation occurs at Asn-359. 2 N-linked (GlcNAc...) asparagine glycosylation sites follow: Asn-423 and Asn-434. A disulfide bond links Cys-424 and Cys-447. The LRRCT domain occupies 521–575; it reads MRSIKAGDNPFQCTCELREFVKNIDQVSSEVLEGWPDSYKCDYPESYRGSPLKDF. N-linked (GlcNAc...) asparagine glycosylation is present at Asn-583. Residues 587-607 form a helical membrane-spanning segment; sequence LIVTIGATMLVLAVTVTSLCI. At 608–796 the chain is on the cytoplasmic side; sequence YLDLPWYLRM…LVTENNDVKS (189 aa). Residues 640-781 enclose the TIR domain; the sequence is LQFHAFISYS…LFWANIRAAF (142 aa).

This sequence belongs to the Toll-like receptor family. As to quaternary structure, homodimer (via cytoplasmic TIR domain). Heterodimer with TLR2 via their respective extracellular domains. Binds MYD88 via their respective TIR domains. Interacts with CD36, following CD36 stimulation by oxLDL or amyloid-beta 42, and forms a heterodimer with TLR4. The trimeric complex is internalized and triggers inflammatory response. LYN kinase activity facilitates TLR4:TLR6 heterodimerization and signal initiation. The heterodimer TLR2:TLR6 interacts with CD14 and CD36 in response to triacylated lipopeptides. In terms of tissue distribution, detected in monocytes, CD11c+ immature dendritic cells, plasmacytoid pre-dendritic cells and dermal microvessel endothelial cells.

Its subcellular location is the cell membrane. The protein resides in the cytoplasmic vesicle. It localises to the phagosome membrane. The protein localises to the membrane raft. It is found in the golgi apparatus. Participates in the innate immune response to Gram-positive bacteria and fungi. Specifically recognizes diacylated and, to a lesser extent, triacylated lipopeptides. In response to diacylated lipopeptides, forms the activation cluster TLR2:TLR6:CD14:CD36, this cluster triggers signaling from the cell surface and subsequently is targeted to the Golgi in a lipid-raft dependent pathway. Acts via MYD88 and TRAF6, leading to NF-kappa-B activation, cytokine secretion and the inflammatory response. Recognizes mycoplasmal macrophage-activating lipopeptide-2kD (MALP-2), soluble tuberculosis factor (STF), phenol-soluble modulin (PSM) and B.burgdorferi outer surface protein A lipoprotein (OspA-L) cooperatively with TLR2. In complex with TLR4, promotes sterile inflammation in monocytes/macrophages in response to oxidized low-density lipoprotein (oxLDL) or amyloid-beta 42. In this context, the initial signal is provided by oxLDL- or amyloid-beta 42-binding to CD36. This event induces the formation of a heterodimer of TLR4 and TLR6, which is rapidly internalized and triggers inflammatory response, leading to the NF-kappa-B-dependent production of CXCL1, CXCL2 and CCL9 cytokines, via MYD88 signaling pathway, and CCL5 cytokine, via TICAM1 signaling pathway, as well as IL1B secretion. The polypeptide is Toll-like receptor 6 (TLR6) (Homo sapiens (Human)).